Consider the following 198-residue polypeptide: LexA repressor (198 aa).

The segment at residues 28-47 (IRDIAKHFKLTPRGAHIHVL) is a DNA-binding region (H-T-H motif). Catalysis depends on for autocatalytic cleavage activity residues serine 120 and lysine 157.

This sequence belongs to the peptidase S24 family. In terms of assembly, homodimer.

The catalysed reaction is Hydrolysis of Ala-|-Gly bond in repressor LexA.. In terms of biological role, represses a number of genes involved in the response to DNA damage (SOS response), including recA and lexA. In the presence of single-stranded DNA, RecA interacts with LexA causing an autocatalytic cleavage which disrupts the DNA-binding part of LexA, leading to derepression of the SOS regulon and eventually DNA repair. This is LexA repressor from Thermosipho africanus (strain TCF52B).